The primary structure comprises 117 residues: Antitoxin RelB3 (117 aa).

Antitoxin component of a type II toxin-antitoxin (TA) system. Neutralizes the effect of cognate toxin RelE3, but no other RelE or ParE toxin. This chain is Antitoxin RelB3 (relB3), found in Caulobacter vibrioides (strain ATCC 19089 / CIP 103742 / CB 15) (Caulobacter crescentus).